A 1004-amino-acid chain; its full sequence is 2-oxoglutarate dehydrogenase E1 component (1004 aa).

Belongs to the alpha-ketoglutarate dehydrogenase family. In terms of assembly, homodimer. Part of the 2-oxoglutarate dehydrogenase (OGDH) complex composed of E1 (2-oxoglutarate dehydrogenase), E2 (dihydrolipoamide succinyltransferase) and E3 (dihydrolipoamide dehydrogenase); the complex contains multiple copies of the three enzymatic components (E1, E2 and E3). Thiamine diphosphate serves as cofactor.

It carries out the reaction N(6)-[(R)-lipoyl]-L-lysyl-[protein] + 2-oxoglutarate + H(+) = N(6)-[(R)-S(8)-succinyldihydrolipoyl]-L-lysyl-[protein] + CO2. E1 component of the 2-oxoglutarate dehydrogenase (OGDH) complex which catalyzes the decarboxylation of 2-oxoglutarate, the first step in the conversion of 2-oxoglutarate to succinyl-CoA and CO(2). The chain is 2-oxoglutarate dehydrogenase E1 component from Brucella suis (strain ATCC 23445 / NCTC 10510).